Reading from the N-terminus, the 391-residue chain is S-adenosylmethionine synthase 5 (391 aa).

E9 contacts Mg(2+). Residue H15 participates in ATP binding. A K(+)-binding site is contributed by E43. L-methionine-binding residues include E56 and Q99. Residues 167–169, 235–238, D246, 252–253, A269, K273, and K277 contribute to the ATP site; these read DGK, SGRF, and RK. Residue D246 coordinates L-methionine. Residue K277 coordinates L-methionine.

Belongs to the AdoMet synthase family. In terms of assembly, homotetramer. It depends on Mn(2+) as a cofactor. Mg(2+) serves as cofactor. Co(2+) is required as a cofactor. Requires K(+) as cofactor.

The protein resides in the cytoplasm. The catalysed reaction is L-methionine + ATP + H2O = S-adenosyl-L-methionine + phosphate + diphosphate. Its pathway is amino-acid biosynthesis; S-adenosyl-L-methionine biosynthesis; S-adenosyl-L-methionine from L-methionine: step 1/1. Functionally, catalyzes the formation of S-adenosylmethionine from methionine and ATP. The reaction comprises two steps that are both catalyzed by the same enzyme: formation of S-adenosylmethionine (AdoMet) and triphosphate, and subsequent hydrolysis of the triphosphate. In Vitis vinifera (Grape), this protein is S-adenosylmethionine synthase 5 (METK5).